The sequence spans 254 residues: Acetylglutamate kinase (254 aa).

Substrate-binding positions include 40–41, R62, and N158; that span reads GG.

This sequence belongs to the acetylglutamate kinase family. ArgB subfamily.

It localises to the cytoplasm. The enzyme catalyses N-acetyl-L-glutamate + ATP = N-acetyl-L-glutamyl 5-phosphate + ADP. It participates in amino-acid biosynthesis; L-arginine biosynthesis; N(2)-acetyl-L-ornithine from L-glutamate: step 2/4. Functionally, catalyzes the ATP-dependent phosphorylation of N-acetyl-L-glutamate. This chain is Acetylglutamate kinase, found in Chloroflexus aggregans (strain MD-66 / DSM 9485).